Reading from the N-terminus, the 701-residue chain is DNA ligase (701 aa).

Residues 43-47, 92-93, and Glu-126 each bind NAD(+); these read DADYD and SL. Lys-128 functions as the N6-AMP-lysine intermediate in the catalytic mechanism. The NAD(+) site is built by Arg-149, Glu-186, Lys-302, and Lys-326. Zn(2+)-binding residues include Cys-417, Cys-420, Cys-440, and Cys-446. The 80-residue stretch at 622-701 folds into the BRCT domain; it reads ETGSPVTGKT…DEWLALIGET (80 aa).

It belongs to the NAD-dependent DNA ligase family. LigA subfamily. Requires Mg(2+) as cofactor. The cofactor is Mn(2+).

It carries out the reaction NAD(+) + (deoxyribonucleotide)n-3'-hydroxyl + 5'-phospho-(deoxyribonucleotide)m = (deoxyribonucleotide)n+m + AMP + beta-nicotinamide D-nucleotide.. Functionally, DNA ligase that catalyzes the formation of phosphodiester linkages between 5'-phosphoryl and 3'-hydroxyl groups in double-stranded DNA using NAD as a coenzyme and as the energy source for the reaction. It is essential for DNA replication and repair of damaged DNA. The sequence is that of DNA ligase from Hyphomonas neptunium (strain ATCC 15444).